The sequence spans 294 residues: Glyceraldehyde-3-phosphate dehydrogenase (294 aa).

The NAD(+) site is built by Asp-19, Lys-63, and Thr-105. D-glyceraldehyde 3-phosphate contacts are provided by residues 134 to 136 (SCT), Thr-165, 194 to 195 (TG), and Arg-217. Residue Cys-135 is the Nucleophile of the active site.

Belongs to the glyceraldehyde-3-phosphate dehydrogenase family. In terms of assembly, homotetramer.

Its subcellular location is the cytoplasm. The enzyme catalyses D-glyceraldehyde 3-phosphate + phosphate + NAD(+) = (2R)-3-phospho-glyceroyl phosphate + NADH + H(+). It functions in the pathway carbohydrate degradation; glycolysis; pyruvate from D-glyceraldehyde 3-phosphate: step 1/5. Catalyzes the oxidative phosphorylation of glyceraldehyde 3-phosphate (G3P) to 1,3-bisphosphoglycerate (BPG) using the cofactor NAD. The first reaction step involves the formation of a hemiacetal intermediate between G3P and a cysteine residue, and this hemiacetal intermediate is then oxidized to a thioester, with concomitant reduction of NAD to NADH. The reduced NADH is then exchanged with the second NAD, and the thioester is attacked by a nucleophilic inorganic phosphate to produce BPG. This is Glyceraldehyde-3-phosphate dehydrogenase (gap) from Serratia odorifera.